The sequence spans 57 residues: DNA-directed RNA polymerase subunit Rpo6 (57 aa).

The protein belongs to the archaeal Rpo6/eukaryotic RPB6 RNA polymerase subunit family. Part of the RNA polymerase complex.

Its subcellular location is the cytoplasm. It catalyses the reaction RNA(n) + a ribonucleoside 5'-triphosphate = RNA(n+1) + diphosphate. Its function is as follows. DNA-dependent RNA polymerase (RNAP) catalyzes the transcription of DNA into RNA using the four ribonucleoside triphosphates as substrates. This Pyrococcus furiosus (strain ATCC 43587 / DSM 3638 / JCM 8422 / Vc1) protein is DNA-directed RNA polymerase subunit Rpo6.